Consider the following 147-residue polypeptide: Ribonuclease H (147 aa).

The RNase H type-1 domain occupies 5–141 (ARKQITLYSD…CDELARNEAE (137 aa)). 4 residues coordinate Mg(2+): D14, E52, D74, and D133.

Belongs to the RNase H family. As to quaternary structure, monomer. The cofactor is Mg(2+).

It is found in the cytoplasm. It catalyses the reaction Endonucleolytic cleavage to 5'-phosphomonoester.. Endonuclease that specifically degrades the RNA of RNA-DNA hybrids. The protein is Ribonuclease H of Sulfurovum sp. (strain NBC37-1).